The chain runs to 1102 residues: DNA-directed RNA polymerase subunit beta (1102 aa).

The segment at 1081–1102 is disordered; it reads LPGKRTPSRPIYESLSTEGNQD.

This sequence belongs to the RNA polymerase beta chain family. In cyanobacteria the RNAP catalytic core is composed of 2 alpha, 1 beta, 1 beta', 1 gamma and 1 omega subunit. When a sigma factor is associated with the core the holoenzyme is formed, which can initiate transcription.

It carries out the reaction RNA(n) + a ribonucleoside 5'-triphosphate = RNA(n+1) + diphosphate. DNA-dependent RNA polymerase catalyzes the transcription of DNA into RNA using the four ribonucleoside triphosphates as substrates. In Trichodesmium erythraeum (strain IMS101), this protein is DNA-directed RNA polymerase subunit beta.